The primary structure comprises 318 residues: Malonyl CoA-acyl carrier protein transacylase, mitochondrial (318 aa).

The protein belongs to the FabD family.

It localises to the mitochondrion. It carries out the reaction holo-[ACP] + malonyl-CoA = malonyl-[ACP] + CoA. It participates in lipid metabolism; fatty acid biosynthesis. Involved in biosynthesis of fatty acids in mitochondria. In Schizosaccharomyces pombe (strain 972 / ATCC 24843) (Fission yeast), this protein is Malonyl CoA-acyl carrier protein transacylase, mitochondrial (mct1).